The following is a 1219-amino-acid chain: Pleckstrin homology domain-containing family G member 3 (1219 aa).

Residues 1-10 (MPVSTSLHQD) are compositionally biased toward polar residues. The tract at residues 1-66 (MPVSTSLHQD…HLPNSNNNSS (66 aa)) is disordered. The span at 18–46 (SLTSTTSSSGSSCDSRSAMEEPSSSEAPA) shows a compositional bias: low complexity. Ser-76 carries the post-translational modification Phosphoserine. Residues 93–272 (YLGRVVREIV…TCVAWYINDM (180 aa)) enclose the DH domain. The 99-residue stretch at 296-394 (DLTTYGELVL…WTHHIKRLIL (99 aa)) folds into the PH domain. The segment covering 431 to 442 (WSSQDEVSTNVR) has biased composition (polar residues). 2 disordered regions span residues 431 to 599 (WSSQ…PSVL) and 613 to 708 (FSRR…KESA). Ser-433 is modified (phosphoserine). Residues 446–463 (RQSEPTKHLLRQLNEKAR) show a composition bias toward basic and acidic residues. A phosphoserine mark is found at Ser-576, Ser-577, Ser-618, Ser-631, Ser-640, Ser-643, and Ser-647. The segment covering 630-645 (GSPRLVSRSSSVLSLE) has biased composition (low complexity). Over residues 696–708 (EPDRSSCKKKESA) the composition is skewed to basic and acidic residues. Ser-741, Ser-779, and Ser-827 each carry phosphoserine. Disordered regions lie at residues 756–780 (RFNS…VGSR), 821–840 (MESS…ANGF), 859–878 (EESA…RSPA), 955–1133 (APER…LYVT), and 1146–1207 (VMEK…RVRN). Residues 826–836 (GSPGKGPGQGQ) are compositionally biased toward gly residues. Positions 859 to 873 (EESATASPESSSPTE) are enriched in low complexity. Ser-962, Ser-1011, Ser-1023, Ser-1037, and Ser-1040 each carry phosphoserine. Residues 1020–1029 (SAVSQRTTSP) are compositionally biased toward polar residues. Over residues 1049–1065 (DVRELCSKYASRDEARR) the composition is skewed to basic and acidic residues. Position 1081 is a phosphoserine (Ser-1081). Arg-1107 is subject to Omega-N-methylarginine. Basic and acidic residues predominate over residues 1187-1197 (QPKEEGSRDPA).

Its subcellular location is the cytoplasm. The protein localises to the cytoskeleton. Functionally, plays a role in controlling cell polarity and cell motility by selectively binding newly polymerized actin and activating RAC1 and CDC42 to enhance local actin polymerization. This chain is Pleckstrin homology domain-containing family G member 3, found in Homo sapiens (Human).